A 200-amino-acid chain; its full sequence is Recombination protein RecR (200 aa).

Residues 57-72 form a C4-type zinc finger; it reads CQHCRTFTENSLCDIC. A Toprim domain is found at 81–176; the sequence is GQLCIVETPA…NITRIAHGVP (96 aa).

This sequence belongs to the RecR family.

In terms of biological role, may play a role in DNA repair. It seems to be involved in an RecBC-independent recombinational process of DNA repair. It may act with RecF and RecO. The chain is Recombination protein RecR from Tolumonas auensis (strain DSM 9187 / NBRC 110442 / TA 4).